We begin with the raw amino-acid sequence, 591 residues long: Parathyroid hormone/parathyroid hormone-related peptide receptor (591 aa).

The first 26 residues, 1 to 26 (MGTARIAPSLALLLCCPVLSSAYALV), serve as a signal peptide directing secretion. Residues 27 to 188 (DADDVFTKEE…REREVFDRLG (162 aa)) are Extracellular-facing. Cystine bridges form between Cys-48–Cys-117, Cys-108–Cys-148, and Cys-131–Cys-170. Residues 67-104 (KGWTPASTSGKPRKEKAPGKFYPESKENKDVPTGSRRR) form a disordered region. A compositionally biased stretch (basic and acidic residues) spans 81–96 (EKAPGKFYPESKENKD). Residues Asn-151, Asn-161, Asn-166, and Asn-176 are each glycosylated (N-linked (GlcNAc...) asparagine). Residues 189-212 (MIYTVGYSMSLASLTVAVLILAYF) form a helical membrane-spanning segment. Topologically, residues 213-219 (RRLHCTR) are cytoplasmic. Residues 220–239 (NYIHMHMFLSFMLRAASIFV) traverse the membrane as a helical segment. Residues 240–282 (KDAVLYSGFTLDEAERLTEEELHIIAQVPPPPAAAAVGYAGCR) are Extracellular-facing. The helical transmembrane segment at 283-306 (VAVTFFLYFLATNYYWILVEGLYL) threads the bilayer. Residues 307–320 (HSLIFMAFFSEKKY) are Cytoplasmic-facing. The helical transmembrane segment at 321–342 (LWGFTIFGWGLPAVFVAVWVGV) threads the bilayer. Residues 343-361 (RATLANTGCWDLSSGHKKW) lie on the Extracellular side of the membrane. A helical membrane pass occupies residues 362 to 382 (IIQVPILASVVLNFILFINII). The Cytoplasmic portion of the chain corresponds to 383 to 409 (RVLATKLRETNAGRCDTRQQYRKLLRS). A helical membrane pass occupies residues 410–428 (TLVLVPLFGVHYTVFMALP). At 429 to 440 (YTEVSGTLWQIQ) the chain is on the extracellular side. A helical transmembrane segment spans residues 441-463 (MHYEMLFNSFQGFFVAIIYCFCN). Residues 464–591 (GEVQAEIRKS…LLQEEWETVM (128 aa)) lie on the Cytoplasmic side of the membrane. Positions 474 to 477 (WSRW) match the Important for interaction with G proteins motif.

The protein belongs to the G-protein coupled receptor 2 family. In terms of assembly, homodimer in the absence of bound ligand. Peptide hormone binding leads to dissociation of the homodimer. N-glycosylated. Detected in kidney.

It is found in the cell membrane. Functionally, G-protein-coupled receptor for parathyroid hormone (PTH) and for parathyroid hormone-related peptide (PTHLH). Ligand binding causes a conformation change that triggers signaling via guanine nucleotide-binding proteins (G proteins) and modulates the activity of downstream effectors, such as adenylate cyclase (cAMP). PTH1R is coupled to G(s) G alpha proteins and mediates activation of adenylate cyclase activity. PTHLH dissociates from PTH1R more rapidly than PTH; as consequence, the cAMP response induced by PTHLH decays faster than the response induced by PTH. This Mus musculus (Mouse) protein is Parathyroid hormone/parathyroid hormone-related peptide receptor (Pth1r).